A 368-amino-acid chain; its full sequence is DNA replication and repair protein RecF (368 aa).

30-37 (GNNAQGKT) provides a ligand contact to ATP.

It belongs to the RecF family.

Its subcellular location is the cytoplasm. Functionally, the RecF protein is involved in DNA metabolism; it is required for DNA replication and normal SOS inducibility. RecF binds preferentially to single-stranded, linear DNA. It also seems to bind ATP. The polypeptide is DNA replication and repair protein RecF (Streptococcus pyogenes serotype M12 (strain MGAS9429)).